Reading from the N-terminus, the 380-residue chain is Glutamine synthetase, chloroplastic (380 aa).

The 91-residue stretch at 35–125 (MAAEYIWADG…VMCEVFAPDG (91 aa)) folds into the GS beta-grasp domain. A GS catalytic domain is found at 132–380 (TRAKLREIID…RLLIKTVLKG (249 aa)).

Belongs to the glutamine synthetase family. Homooctamer.

It is found in the plastid. It localises to the chloroplast. It carries out the reaction L-glutamate + NH4(+) + ATP = L-glutamine + ADP + phosphate + H(+). This Chlamydomonas reinhardtii (Chlamydomonas smithii) protein is Glutamine synthetase, chloroplastic (GLN2).